The sequence spans 564 residues: 2-succinyl-5-enolpyruvyl-6-hydroxy-3-cyclohexene-1-carboxylate synthase (564 aa).

Belongs to the TPP enzyme family. MenD subfamily. Homodimer. Mg(2+) serves as cofactor. The cofactor is Mn(2+). Thiamine diphosphate is required as a cofactor.

It carries out the reaction isochorismate + 2-oxoglutarate + H(+) = 5-enolpyruvoyl-6-hydroxy-2-succinyl-cyclohex-3-ene-1-carboxylate + CO2. It participates in quinol/quinone metabolism; 1,4-dihydroxy-2-naphthoate biosynthesis; 1,4-dihydroxy-2-naphthoate from chorismate: step 2/7. It functions in the pathway quinol/quinone metabolism; menaquinone biosynthesis. Functionally, catalyzes the thiamine diphosphate-dependent decarboxylation of 2-oxoglutarate and the subsequent addition of the resulting succinic semialdehyde-thiamine pyrophosphate anion to isochorismate to yield 2-succinyl-5-enolpyruvyl-6-hydroxy-3-cyclohexene-1-carboxylate (SEPHCHC). This chain is 2-succinyl-5-enolpyruvyl-6-hydroxy-3-cyclohexene-1-carboxylate synthase, found in Photorhabdus laumondii subsp. laumondii (strain DSM 15139 / CIP 105565 / TT01) (Photorhabdus luminescens subsp. laumondii).